The sequence spans 694 residues: DNA-directed RNA polymerase subunit beta' (694 aa).

The Zn(2+) site is built by Cys69, Cys71, Cys87, and Cys90. Asp489, Asp491, and Asp493 together coordinate Mg(2+).

It belongs to the RNA polymerase beta' chain family. RpoC1 subfamily. As to quaternary structure, in plastids the minimal PEP RNA polymerase catalytic core is composed of four subunits: alpha, beta, beta', and beta''. When a (nuclear-encoded) sigma factor is associated with the core the holoenzyme is formed, which can initiate transcription. Requires Mg(2+) as cofactor. It depends on Zn(2+) as a cofactor.

The protein localises to the plastid. It is found in the chloroplast. The catalysed reaction is RNA(n) + a ribonucleoside 5'-triphosphate = RNA(n+1) + diphosphate. In terms of biological role, DNA-dependent RNA polymerase catalyzes the transcription of DNA into RNA using the four ribonucleoside triphosphates as substrates. The protein is DNA-directed RNA polymerase subunit beta' of Adiantum capillus-veneris (Maidenhair fern).